The following is a 193-amino-acid chain: Peptidyl-tRNA hydrolase (193 aa).

Tyr-15 contacts tRNA. Catalysis depends on His-20, which acts as the Proton acceptor. The tRNA site is built by Phe-65, Asn-67, and Asn-113.

Belongs to the PTH family. As to quaternary structure, monomer.

Its subcellular location is the cytoplasm. It carries out the reaction an N-acyl-L-alpha-aminoacyl-tRNA + H2O = an N-acyl-L-amino acid + a tRNA + H(+). Functionally, hydrolyzes ribosome-free peptidyl-tRNAs (with 1 or more amino acids incorporated), which drop off the ribosome during protein synthesis, or as a result of ribosome stalling. Its function is as follows. Catalyzes the release of premature peptidyl moieties from peptidyl-tRNA molecules trapped in stalled 50S ribosomal subunits, and thus maintains levels of free tRNAs and 50S ribosomes. The polypeptide is Peptidyl-tRNA hydrolase (Ehrlichia ruminantium (strain Gardel)).